We begin with the raw amino-acid sequence, 530 residues long: Glutamate--cysteine ligase (530 aa).

This sequence belongs to the glutamate--cysteine ligase type 1 family. Type 1 subfamily.

It catalyses the reaction L-cysteine + L-glutamate + ATP = gamma-L-glutamyl-L-cysteine + ADP + phosphate + H(+). It functions in the pathway sulfur metabolism; glutathione biosynthesis; glutathione from L-cysteine and L-glutamate: step 1/2. The polypeptide is Glutamate--cysteine ligase (Saccharophagus degradans (strain 2-40 / ATCC 43961 / DSM 17024)).